The sequence spans 232 residues: Phosphatidylserine decarboxylase proenzyme (232 aa).

The active-site Schiff-base intermediate with substrate; via pyruvic acid is serine 190. The residue at position 190 (serine 190) is a Pyruvic acid (Ser); by autocatalysis.

It belongs to the phosphatidylserine decarboxylase family. PSD-A subfamily. In terms of assembly, heterodimer of a large membrane-associated beta subunit and a small pyruvoyl-containing alpha subunit. The cofactor is pyruvate. Is synthesized initially as an inactive proenzyme. Formation of the active enzyme involves a self-maturation process in which the active site pyruvoyl group is generated from an internal serine residue via an autocatalytic post-translational modification. Two non-identical subunits are generated from the proenzyme in this reaction, and the pyruvate is formed at the N-terminus of the alpha chain, which is derived from the carboxyl end of the proenzyme. The post-translation cleavage follows an unusual pathway, termed non-hydrolytic serinolysis, in which the side chain hydroxyl group of the serine supplies its oxygen atom to form the C-terminus of the beta chain, while the remainder of the serine residue undergoes an oxidative deamination to produce ammonia and the pyruvoyl prosthetic group on the alpha chain.

It is found in the cell membrane. The catalysed reaction is a 1,2-diacyl-sn-glycero-3-phospho-L-serine + H(+) = a 1,2-diacyl-sn-glycero-3-phosphoethanolamine + CO2. The protein operates within phospholipid metabolism; phosphatidylethanolamine biosynthesis; phosphatidylethanolamine from CDP-diacylglycerol: step 2/2. Its function is as follows. Catalyzes the formation of phosphatidylethanolamine (PtdEtn) from phosphatidylserine (PtdSer). This is Phosphatidylserine decarboxylase proenzyme from Brucella anthropi (strain ATCC 49188 / DSM 6882 / CCUG 24695 / JCM 21032 / LMG 3331 / NBRC 15819 / NCTC 12168 / Alc 37) (Ochrobactrum anthropi).